A 180-amino-acid polypeptide reads, in one-letter code: Hypoxanthine-guanine phosphoribosyltransferase (180 aa).

Positions 43 and 44 each coordinate diphosphate. Mg(2+) is bound by residues Glu99 and Asp100. The Proton acceptor role is filled by Asp103. Residues Lys131, 152–153 (FV), and Asp159 contribute to the GMP site. Arg165 provides a ligand contact to diphosphate.

This sequence belongs to the purine/pyrimidine phosphoribosyltransferase family. Mg(2+) is required as a cofactor.

Its subcellular location is the cytoplasm. It catalyses the reaction IMP + diphosphate = hypoxanthine + 5-phospho-alpha-D-ribose 1-diphosphate. The enzyme catalyses GMP + diphosphate = guanine + 5-phospho-alpha-D-ribose 1-diphosphate. It functions in the pathway purine metabolism; IMP biosynthesis via salvage pathway; IMP from hypoxanthine: step 1/1. The protein operates within purine metabolism; GMP biosynthesis via salvage pathway; GMP from guanine: step 1/1. Purine salvage pathway enzyme that catalyzes the transfer of the ribosyl-5-phosphate group from 5-phospho-alpha-D-ribose 1-diphosphate (PRPP) to the N9 position of the 6-oxopurines hypoxanthine and guanine to form the corresponding ribonucleotides IMP (inosine 5'-monophosphate) and GMP (guanosine 5'-monophosphate), with the release of PPi. This is Hypoxanthine-guanine phosphoribosyltransferase (hprT) from Bacillus subtilis (strain 168).